The following is a 393-amino-acid chain: Golgi membrane protein 1 (393 aa).

Position 1 is an N-acetylmethionine (M1). At 1-12 the chain is on the cytoplasmic side; it reads MMGLGNGRRSMK. The chain crosses the membrane as a helical; Signal-anchor for type II membrane protein span at residues 13–35; the sequence is SPPLILAALVACVIVLGFNYWIA. The Lumenal portion of the chain corresponds to 36-393; it reads SSRSVELQTR…QVGIHIPQQA (358 aa). Residues 40 to 183 adopt a coiled-coil conformation; sequence VELQTRIVEL…IEEVIRKRNE (144 aa). 2 N-linked (GlcNAc...) asparagine glycosylation sites follow: N109 and N144. Disordered regions lie at residues 180–247 and 284–352; these read KRNE…QVQN and HTQL…LAGN. Phosphoserine is present on S187. Polar residues-rich tracts occupy residues 192–201 and 227–247; these read ETNNQHQQAL and NKSQ…QVQN. The N-linked (GlcNAc...) asparagine glycan is linked to N227. Residues 294–320 show a composition bias toward basic and acidic residues; it reads RPEEDSQYPEREQLVIRDRQEQQRASE. The span at 330–339 shows a compositional bias: acidic residues; sequence DEYDMDENEA.

This sequence belongs to the GOLM family. As to quaternary structure, interacts with DYM. Glycosylated. In terms of processing, phosphorylation sites are present in the extracellular medium.

It localises to the golgi apparatus. The protein resides in the cis-Golgi network membrane. Its function is as follows. Unknown. Cellular response protein to viral infection. This chain is Golgi membrane protein 1 (Golm1), found in Mus musculus (Mouse).